The chain runs to 338 residues: Glyceraldehyde-3-phosphate dehydrogenase, cytosolic (338 aa).

Residues 14-15 (RI), Asp-36, and Arg-83 each bind NAD(+). Residues 154 to 156 (SCT), Thr-185, 214 to 215 (TG), and Arg-237 each bind D-glyceraldehyde 3-phosphate. Cys-155 functions as the Nucleophile in the catalytic mechanism. Residue Asn-319 participates in NAD(+) binding.

The protein belongs to the glyceraldehyde-3-phosphate dehydrogenase family. As to quaternary structure, homotetramer.

The protein localises to the cytoplasm. It carries out the reaction D-glyceraldehyde 3-phosphate + phosphate + NAD(+) = (2R)-3-phospho-glyceroyl phosphate + NADH + H(+). The protein operates within carbohydrate degradation; glycolysis; pyruvate from D-glyceraldehyde 3-phosphate: step 1/5. Functionally, key enzyme in glycolysis that catalyzes the first step of the pathway by converting D-glyceraldehyde 3-phosphate (G3P) into 3-phospho-D-glyceroyl phosphate. Essential for the maintenance of cellular ATP levels and carbohydrate metabolism. In Ranunculus acris (Meadow buttercup), this protein is Glyceraldehyde-3-phosphate dehydrogenase, cytosolic (GAPC).